Reading from the N-terminus, the 176-residue chain is Scytalone dehydratase-like protein AacuK (176 aa).

Substrate-binding residues include Tyr-26 and Tyr-46. Residues His-81 and His-107 contribute to the active site.

It belongs to the scytalone dehydratase family.

It functions in the pathway secondary metabolite biosynthesis. Functionally, scytalone dehydratase-like protein; part of the gene cluster that mediates the biosynthesis of the tetrahydroxanthone dimer secalonic acid D. The pathway begins with the synthesis of atrochrysone thioester by the polyketide synthase AacuL. The atrochrysone carboxyl ACP thioesterase AacuM then breaks the thioester bond and releases the atrochrysone carboxylic acid from AacuL. Atrochrysone carboxylic acid is decarboxylated by the decarboxylase AacuI, and oxidized by the anthrone oxygenase AacuG to yield emodin. Emodin is then reduced to emodin hydroquinone by a yet unidentified oxidoreductase. A-ring reduction by the short chain dehydrogenase AacuN, dehydration by the scytalone dehydratase-like protein AacuK and probable spontaneous re-oxidation, results in overall deoxygenation to chrysophanol. Baeyer-Villiger oxidation by the Baeyer-Villiger monooxygenase (BVMO) AacuH then yields monodictyphenone. Monodictyphenone is transformed into compounds with the tetrahydroxanthone skeleton via methylesterification by the methyltransferase AacuQ, followed by the action of the flavin-dependent monooxygenase AacuC, the isomerase AacuP, and the short chain dehydrogenase/reductase AacuF or AacuD. AacuF and AacuD should accept the same compound as a substrate but perform the ketoreduction with a different stereoselectivity, thus yielding blennolides B and A, respectively. In the final step of the biosynthesis, the cytochrome P450 monooxygenase AacuE accepts blennolide B and/or blennolide A to conduct the dimerization reaction to furnish the tetrahydroxanthone dimers, secalonic acids D, B, and F. The sequence is that of Scytalone dehydratase-like protein AacuK from Aspergillus aculeatus (strain ATCC 16872 / CBS 172.66 / WB 5094).